The sequence spans 231 residues: Cytochrome c oxidase subunit 2 (231 aa).

At 1-30 (MNNFFQGYNLLFQHSLFASYMDWFHSFNCS) the chain is on the mitochondrial intermembrane side. A helical membrane pass occupies residues 31 to 52 (LLLGVLVFVTLLFGYLIFGTFY). Residues 53 to 69 (FKSKKIEYQFGELLCSI) lie on the Mitochondrial matrix side of the membrane. A helical transmembrane segment spans residues 70 to 89 (FPTIILLMQMVPSLSLLYYY). Residues 90 to 231 (GLMNLDSNLT…FKSWCFGTME (142 aa)) are Mitochondrial intermembrane-facing. His164, Cys199, Glu201, Cys203, His207, and Met210 together coordinate Cu cation. Glu201 contributes to the Mg(2+) binding site.

This sequence belongs to the cytochrome c oxidase subunit 2 family. Component of the cytochrome c oxidase (complex IV, CIV), a multisubunit enzyme composed of a catalytic core of 3 subunits and several supernumerary subunits. The complex exists as a monomer or a dimer and forms supercomplexes (SCs) in the inner mitochondrial membrane with ubiquinol-cytochrome c oxidoreductase (cytochrome b-c1 complex, complex III, CIII). The cofactor is Cu cation.

Its subcellular location is the mitochondrion inner membrane. The enzyme catalyses 4 Fe(II)-[cytochrome c] + O2 + 8 H(+)(in) = 4 Fe(III)-[cytochrome c] + 2 H2O + 4 H(+)(out). In terms of biological role, component of the cytochrome c oxidase, the last enzyme in the mitochondrial electron transport chain which drives oxidative phosphorylation. The respiratory chain contains 3 multisubunit complexes succinate dehydrogenase (complex II, CII), ubiquinol-cytochrome c oxidoreductase (cytochrome b-c1 complex, complex III, CIII) and cytochrome c oxidase (complex IV, CIV), that cooperate to transfer electrons derived from NADH and succinate to molecular oxygen, creating an electrochemical gradient over the inner membrane that drives transmembrane transport and the ATP synthase. Cytochrome c oxidase is the component of the respiratory chain that catalyzes the reduction of oxygen to water. Electrons originating from reduced cytochrome c in the intermembrane space (IMS) are transferred via the dinuclear copper A center (CU(A)) of subunit 2 and heme A of subunit 1 to the active site in subunit 1, a binuclear center (BNC) formed by heme A3 and copper B (CU(B)). The BNC reduces molecular oxygen to 2 water molecules using 4 electrons from cytochrome c in the IMS and 4 protons from the mitochondrial matrix. The sequence is that of Cytochrome c oxidase subunit 2 from Caenorhabditis elegans.